A 536-amino-acid polypeptide reads, in one-letter code: Probable cytochrome P450 318a1 (536 aa).

The segment covering 439-457 (EEEQLSKGHNDSGSGEKRR) has biased composition (basic and acidic residues). Residues 439-460 (EEEQLSKGHNDSGSGEKRRQRD) are disordered. C477 is a binding site for heme.

It belongs to the cytochrome P450 family. The cofactor is heme.

The protein resides in the endoplasmic reticulum membrane. It is found in the microsome membrane. Functionally, may be involved in the metabolism of insect hormones and in the breakdown of synthetic insecticides. This is Probable cytochrome P450 318a1 (Cyp318a1) from Drosophila melanogaster (Fruit fly).